Consider the following 480-residue polypeptide: Lysosomal protective protein (480 aa).

Residues Met1–Ala28 form the signal peptide. Disulfide bonds link Cys88–Cys362, Cys240–Cys256, Cys241–Cys246, and Cys281–Cys331. N-linked (GlcNAc...) asparagine glycosylation occurs at Asn145. The active site involves Ser178. The N-linked (GlcNAc...) asparagine glycan is linked to Asn333. Catalysis depends on residues Asp400 and His457.

The protein belongs to the peptidase S10 family. Heterodimer of a 32 kDa chain and a 20 kDa chain; disulfide-linked.

The protein resides in the lysosome. It catalyses the reaction Release of a C-terminal amino acid with broad specificity.. Protective protein appears to be essential for both the activity of beta-galactosidase and neuraminidase, it associates with these enzymes and exerts a protective function necessary for their stability and activity. This protein is also a carboxypeptidase and can deamidate tachykinins. The chain is Lysosomal protective protein (CTSA) from Homo sapiens (Human).